The chain runs to 283 residues: ATP phosphoribosyltransferase (283 aa).

The protein belongs to the ATP phosphoribosyltransferase family. Long subfamily. Mg(2+) serves as cofactor.

The protein localises to the cytoplasm. The enzyme catalyses 1-(5-phospho-beta-D-ribosyl)-ATP + diphosphate = 5-phospho-alpha-D-ribose 1-diphosphate + ATP. It functions in the pathway amino-acid biosynthesis; L-histidine biosynthesis; L-histidine from 5-phospho-alpha-D-ribose 1-diphosphate: step 1/9. Its activity is regulated as follows. Feedback inhibited by histidine. Its function is as follows. Catalyzes the condensation of ATP and 5-phosphoribose 1-diphosphate to form N'-(5'-phosphoribosyl)-ATP (PR-ATP). Has a crucial role in the pathway because the rate of histidine biosynthesis seems to be controlled primarily by regulation of HisG enzymatic activity. The protein is ATP phosphoribosyltransferase of Bifidobacterium longum subsp. infantis (strain ATCC 15697 / DSM 20088 / JCM 1222 / NCTC 11817 / S12).